The primary structure comprises 130 residues: Ribosome-binding factor A (130 aa).

Belongs to the RbfA family. Monomer. Binds 30S ribosomal subunits, but not 50S ribosomal subunits or 70S ribosomes.

The protein resides in the cytoplasm. Its function is as follows. One of several proteins that assist in the late maturation steps of the functional core of the 30S ribosomal subunit. Associates with free 30S ribosomal subunits (but not with 30S subunits that are part of 70S ribosomes or polysomes). Required for efficient processing of 16S rRNA. May interact with the 5'-terminal helix region of 16S rRNA. This chain is Ribosome-binding factor A, found in Prochlorococcus marinus (strain MIT 9312).